Consider the following 567-residue polypeptide: Low-affinity glucose transporter HXT3 (567 aa).

The segment covering 1–29 has biased composition (polar residues); that stretch reads MNSTPDLISPQKSSENSNADLPSNSSQVM. Residues 1 to 30 form a disordered region; sequence MNSTPDLISPQKSSENSNADLPSNSSQVMN. Over 1–57 the chain is Cytoplasmic; the sequence is MNSTPDLISPQKSSENSNADLPSNSSQVMNMPEEKGVQDDFQAEADQVLTNPNTGKG. The residue at position 23 (serine 23) is a Phosphoserine. The chain crosses the membrane as a helical span at residues 58–78; it reads AYVTVSICCVMVAFGGFVFGW. At 79–113 the chain is on the extracellular side; the sequence is DTGTISGFVAQTDFLRRFGMKHKDGSYYLSKVRTG. Residues 114–134 traverse the membrane as a helical segment; that stretch reads LIVSIFNIGCAIGGIILAKLG. The Cytoplasmic portion of the chain corresponds to 135-140; it reads DMYGRK. The helical transmembrane segment at 141–161 threads the bilayer; it reads MGLIVVVVIYIIGIIIQIASI. The Extracellular portion of the chain corresponds to 162–171; the sequence is NKWYQYFIGR. Residues 172–192 form a helical membrane-spanning segment; the sequence is IISGLGVGGIAVLSPMLISEV. Over 193-198 the chain is Cytoplasmic; that stretch reads APKEMR. The chain crosses the membrane as a helical span at residues 199 to 219; the sequence is GTLVSCYQLMITLGIFLGYCT. At 220–233 the chain is on the extracellular side; that stretch reads NFGTKNYSNSVQWR. N-linked (GlcNAc...) asparagine glycosylation is present at asparagine 225. Residues 234–254 form a helical membrane-spanning segment; the sequence is VPLGLCFAWALFMIGGMTFVP. Residues 255-337 are Cytoplasmic-facing; that stretch reads ESPRYLVEAG…IQSLQQLTGD (83 aa). A helical transmembrane segment spans residues 338 to 354; sequence NYFFYYGTTVFNAVGMS. The Extracellular segment spans residues 355–360; that stretch reads DSFETS. A helical membrane pass occupies residues 361 to 378; the sequence is IVFGVVNFFSTCCSLYTV. Residues 379–385 are Cytoplasmic-facing; the sequence is DRFGRRN. A helical transmembrane segment spans residues 386-406; that stretch reads CLLYGAIGMVCCYVVYASVGV. The Extracellular portion of the chain corresponds to 407 to 428; the sequence is TRLWPNGEGNGSSKGAGNCMIV. N-linked (GlcNAc...) asparagine glycosylation is present at asparagine 416. Residues 429 to 449 form a helical membrane-spanning segment; sequence FACFYIFCFATTWAPIAYVVI. The Cytoplasmic segment spans residues 450-466; sequence SETFPLRVKSKAMSIAT. Residues 467 to 487 traverse the membrane as a helical segment; that stretch reads AANWLWGFLIGFFTPFITGAI. Residue asparagine 488 is a topological domain, extracellular. The chain crosses the membrane as a helical span at residues 489–509; that stretch reads FYYGYVFMGCMVFAYFYVFFF. The Cytoplasmic portion of the chain corresponds to 510–567; sequence VPETKGLTLEEVNDMYAEGVLPWKSASWVPTSQRGANYDADALMHDDQPFYKKMFGKK.

Belongs to the major facilitator superfamily. Sugar transporter (TC 2.A.1.1) family.

It localises to the membrane. Low-affinity glucose transporter. The protein is Low-affinity glucose transporter HXT3 (HXT3) of Saccharomyces cerevisiae (strain ATCC 204508 / S288c) (Baker's yeast).